The chain runs to 136 residues: Probable disulfide formation protein (136 aa).

A helical membrane pass occupies residues 7-26; that stretch reads NNALYFAWLICSTGTVMSIY. Cysteine 36 and cysteine 39 are oxidised to a cystine. A run of 2 helical transmembrane segments spans residues 41 to 60 and 67 to 84; these read YQRI…TYRE and YALP…YQIC. A disulfide bridge connects residues cysteine 96 and cysteine 101. A helical transmembrane segment spans residues 109 to 133; the sequence is GFITVPMASALAFCAISCLLILSGS.

This sequence belongs to the DsbB family. BdbC subfamily.

Its subcellular location is the cell inner membrane. Required for disulfide bond formation in some proteins. This is Probable disulfide formation protein from Chlamydia caviae (strain ATCC VR-813 / DSM 19441 / 03DC25 / GPIC) (Chlamydophila caviae).